Consider the following 430-residue polypeptide: Mitochondrial distribution and morphology protein 10 (430 aa).

Polar residues predominate over residues 215-234 (SSSAMNPPSGTSASETNGSG). Disordered stretches follow at residues 215–237 (SSSAMNPPSGTSASETNGSGPSV) and 339–393 (LGAN…GPKE).

The protein belongs to the MDM10 family. In terms of assembly, component of the ER-mitochondria encounter structure (ERMES) or MDM complex, composed of MMM1, MDM10, MDM12 and MDM34. Associates with the mitochondrial outer membrane sorting assembly machinery SAM(core) complex.

Its subcellular location is the mitochondrion outer membrane. In terms of biological role, component of the ERMES/MDM complex, which serves as a molecular tether to connect the endoplasmic reticulum and mitochondria. Components of this complex are involved in the control of mitochondrial shape and protein biogenesis and may function in phospholipid exchange. MDM10 is involved in the late assembly steps of the general translocase of the mitochondrial outer membrane (TOM complex). Functions in the TOM40-specific route of the assembly of outer membrane beta-barrel proteins, including the association of TOM40 with the receptor TOM22 and small TOM proteins. Can associate with the SAM(core) complex as well as the MDM12-MMM1 complex, both involved in late steps of the major beta-barrel assembly pathway, that is responsible for biogenesis of all outer membrane beta-barrel proteins. May act as a switch that shuttles between both complexes and channels precursor proteins into the TOM40-specific pathway. Plays a role in mitochondrial morphology and in the inheritance of mitochondria. This Chaetomium globosum (strain ATCC 6205 / CBS 148.51 / DSM 1962 / NBRC 6347 / NRRL 1970) (Soil fungus) protein is Mitochondrial distribution and morphology protein 10.